A 500-amino-acid polypeptide reads, in one-letter code: Histidinol dehydrogenase homolog 1 (500 aa).

Positions 1–25 (MPPAGGIFHRPPTTRKSRRLTPRSA) are disordered. The span at 12–21 (PTTRKSRRLT) shows a compositional bias: basic residues. 2 residues coordinate Zn(2+): Gln-313 and His-316. Catalysis depends on proton acceptor residues Glu-381 and His-382. 2 residues coordinate Zn(2+): Asp-415 and His-475.

The protein belongs to the histidinol dehydrogenase family. Requires Zn(2+) as cofactor.

The polypeptide is Histidinol dehydrogenase homolog 1 (Mesorhizobium japonicum (strain LMG 29417 / CECT 9101 / MAFF 303099) (Mesorhizobium loti (strain MAFF 303099))).